Reading from the N-terminus, the 436-residue chain is Trigger factor (436 aa).

Residues 163 to 248 enclose the PPIase FKBP-type domain; that stretch reads DDRIVLDFAG…VKEVAEAVLP (86 aa).

This sequence belongs to the FKBP-type PPIase family. Tig subfamily.

It is found in the cytoplasm. The catalysed reaction is [protein]-peptidylproline (omega=180) = [protein]-peptidylproline (omega=0). Involved in protein export. Acts as a chaperone by maintaining the newly synthesized protein in an open conformation. Functions as a peptidyl-prolyl cis-trans isomerase. The chain is Trigger factor from Bordetella avium (strain 197N).